We begin with the raw amino-acid sequence, 363 residues long: UDP-N-acetylglucosamine--N-acetylmuramyl-(pentapeptide) pyrophosphoryl-undecaprenol N-acetylglucosamine transferase (363 aa).

UDP-N-acetyl-alpha-D-glucosamine contacts are provided by residues 12–14, Asn122, Arg164, Ser191, Ile245, and Gln290; that span reads TGG.

It belongs to the glycosyltransferase 28 family. MurG subfamily.

The protein localises to the cell membrane. It catalyses the reaction di-trans,octa-cis-undecaprenyl diphospho-N-acetyl-alpha-D-muramoyl-L-alanyl-D-glutamyl-meso-2,6-diaminopimeloyl-D-alanyl-D-alanine + UDP-N-acetyl-alpha-D-glucosamine = di-trans,octa-cis-undecaprenyl diphospho-[N-acetyl-alpha-D-glucosaminyl-(1-&gt;4)]-N-acetyl-alpha-D-muramoyl-L-alanyl-D-glutamyl-meso-2,6-diaminopimeloyl-D-alanyl-D-alanine + UDP + H(+). Its pathway is cell wall biogenesis; peptidoglycan biosynthesis. In terms of biological role, cell wall formation. Catalyzes the transfer of a GlcNAc subunit on undecaprenyl-pyrophosphoryl-MurNAc-pentapeptide (lipid intermediate I) to form undecaprenyl-pyrophosphoryl-MurNAc-(pentapeptide)GlcNAc (lipid intermediate II). The polypeptide is UDP-N-acetylglucosamine--N-acetylmuramyl-(pentapeptide) pyrophosphoryl-undecaprenol N-acetylglucosamine transferase (Lawsonia intracellularis (strain PHE/MN1-00)).